The sequence spans 123 residues: Holo-[acyl-carrier-protein] synthase (123 aa).

The Mg(2+) site is built by Asp8 and Glu56.

This sequence belongs to the P-Pant transferase superfamily. AcpS family. Requires Mg(2+) as cofactor.

It is found in the cytoplasm. The catalysed reaction is apo-[ACP] + CoA = holo-[ACP] + adenosine 3',5'-bisphosphate + H(+). In terms of biological role, transfers the 4'-phosphopantetheine moiety from coenzyme A to a Ser of acyl-carrier-protein. This is Holo-[acyl-carrier-protein] synthase from Clostridium beijerinckii (strain ATCC 51743 / NCIMB 8052) (Clostridium acetobutylicum).